The primary structure comprises 388 residues: Alanine racemase 2 (388 aa).

Lysine 39 acts as the Proton acceptor; specific for D-alanine in catalysis. At lysine 39 the chain carries N6-(pyridoxal phosphate)lysine. Arginine 137 contacts substrate. Tyrosine 267 acts as the Proton acceptor; specific for L-alanine in catalysis. Methionine 315 serves as a coordination point for substrate.

The protein belongs to the alanine racemase family. It depends on pyridoxal 5'-phosphate as a cofactor.

The enzyme catalyses L-alanine = D-alanine. Its pathway is amino-acid biosynthesis; D-alanine biosynthesis; D-alanine from L-alanine: step 1/1. Functionally, catalyzes the interconversion of L-alanine and D-alanine. May also act on other amino acids. The sequence is that of Alanine racemase 2 (alr2) from Caldanaerobacter subterraneus subsp. tengcongensis (strain DSM 15242 / JCM 11007 / NBRC 100824 / MB4) (Thermoanaerobacter tengcongensis).